We begin with the raw amino-acid sequence, 514 residues long: MTLIWRHLLRPLCLVTSAPRILEMHPFLSLGTSRTSVTKLSLHTKPRMPPCDFMPERYQSLGYNRVLEIHKEHLSPVVTAYFQKPLLLHQGHMEWLFDAEGSRYLDFFSGIVTVSVGHCHPKVNAVAQKQLGRLWHTSTVFFHPPMHEYAEKLAALLPEPLKVIFLVNSGSEANELAMLMARAHSNNIDIISFRGAYHGCSPYTLGLTNVGTYKMELPGGTGCQPTMCPDVFRGPWGGSHCRDSPVQTIRKCSCAPDCCQAKDQYIEQFKDTLSTSVAKSIAGFFAEPIQGVNGVVQYPKGFLKEAFELVRARGGVCIADEVQTGFGRLGSHFWGFQTHDVLPDIVTMAKGIGNGFPMAAVITTPEIAKSLAKCLQHFNTFGGNPMACAIGSAVLEVIKEENLQENSQEVGTYMLLKFAKLRDEFEIVGDVRGKGLMIGIEMVQDKISCRPLPREEVNQIHEDCKHMGLLVGRGSIFSQTFRIAPSMCITKPEVDFAVEVFRSALTQHMERRAK.

Residues 1–41 (MTLIWRHLLRPLCLVTSAPRILEMHPFLSLGTSRTSVTKLS) constitute a mitochondrion transit peptide. Lys-71 carries the post-translational modification N6-acetyllysine; alternate. Lys-71 carries the post-translational modification N6-succinyllysine; alternate. The residue at position 84 (Lys-84) is an N6-acetyllysine. Position 262 is an N6-acetyllysine; alternate (Lys-262). Lys-262 is modified (N6-succinyllysine; alternate). Position 304 is an N6-succinyllysine (Lys-304). Position 350 is an N6-(pyridoxal phosphate)lysine (Lys-350). 2 positions are modified to N6-acetyllysine; alternate: Lys-417 and Lys-420. N6-succinyllysine; alternate is present on residues Lys-417 and Lys-420.

Belongs to the class-III pyridoxal-phosphate-dependent aminotransferase family. In terms of assembly, homotetramer. Pyridoxal 5'-phosphate serves as cofactor. In terms of tissue distribution, expressed in the convoluted tubule in the kidney and in the liver hepatocytes (at protein level).

The protein localises to the mitochondrion. It carries out the reaction glyoxylate + L-alanine = glycine + pyruvate. The enzyme catalyses (R)-3-amino-2-methylpropanoate + pyruvate = 2-methyl-3-oxopropanoate + L-alanine. The catalysed reaction is 3-oxopropanoate + L-alanine = beta-alanine + pyruvate. It catalyses the reaction 2-oxobutanoate + L-alanine = (2S)-2-aminobutanoate + pyruvate. It carries out the reaction N(omega),N(omega)-dimethyl-L-arginine + pyruvate = 5-(3,3-dimethylguanidino)-2-oxopentanoate + L-alanine. The enzyme catalyses N(omega),N('omega)-dimethyl-L-arginine + pyruvate = 5-(3,3'-dimethylguanidino)-2-oxopentanoate + L-alanine. The catalysed reaction is N(omega),N(omega)-dimethyl-L-arginine + glyoxylate = 5-(3,3-dimethylguanidino)-2-oxopentanoate + glycine. It catalyses the reaction N(omega),N('omega)-dimethyl-L-arginine + glyoxylate = 5-(3,3'-dimethylguanidino)-2-oxopentanoate + glycine. It carries out the reaction N(omega)-methyl-L-arginine + pyruvate = 5-(3-methylguanidino)-2-oxopentanoate + L-alanine. The enzyme catalyses N(omega)-methyl-L-arginine + glyoxylate = 5-(3-methylguanidino)-2-oxopentanoate + glycine. The catalysed reaction is L-ornithine + pyruvate = 5-amino-2-oxopentanoate + L-alanine. It catalyses the reaction L-ornithine + glyoxylate = 5-amino-2-oxopentanoate + glycine. It carries out the reaction (2S)-2-aminobutanoate + glyoxylate = 2-oxobutanoate + glycine. The enzyme catalyses N(omega),N(omega)-dimethyl-L-arginine + oxaloacetate = 5-(3,3-dimethylguanidino)-2-oxopentanoate + L-aspartate. The catalysed reaction is oxaloacetate + L-alanine = L-aspartate + pyruvate. It catalyses the reaction N(omega),N(omega)-dimethyl-L-arginine + 2-oxobutanoate = 5-(3,3-dimethylguanidino)-2-oxopentanoate + (2S)-2-aminobutanoate. It carries out the reaction 2-oxopentanoate + N(omega),N(omega)-dimethyl-L-arginine = 5-(3,3-dimethylguanidino)-2-oxopentanoate + L-2-aminopentanoate. The enzyme catalyses 2-oxohexanoate + N(omega),N(omega)-dimethyl-L-arginine = L-2-aminohexanoate + 5-(3,3-dimethylguanidino)-2-oxopentanoate. In terms of biological role, multifunctional aminotransferase with a broad substrate specificity. Catalyzes the conversion of glyoxylate to glycine using alanine as the amino donor. Catalyzes metabolism of not L- but the D-isomer of D-beta-aminoisobutyric acid to generate 2-methyl-3-oxopropanoate and alanine. Catalyzes the transfer of the amino group from beta-alanine to pyruvate to yield L-alanine and 3-oxopropanoate. Can metabolize NG-monomethyl-L-arginine (NMMA), asymmetric NG,NG-dimethyl-L-arginine (ADMA) and symmetric NG,N'G-dimethyl-L-arginine (SDMA). ADMA is a potent inhibitor of nitric-oxide (NO) synthase, and this activity provides mechanism through which the kidney regulates blood pressure. The sequence is that of Alanine--glyoxylate aminotransferase 2, mitochondrial (AGXT2) from Homo sapiens (Human).